Here is a 399-residue protein sequence, read N- to C-terminus: Acetate kinase (399 aa).

Asn10 is a binding site for Mg(2+). Lys17 serves as a coordination point for ATP. A substrate-binding site is contributed by Arg91. Asp148 (proton donor/acceptor) is an active-site residue. Residues 208–212 (HLGNG), 283–285 (DCR), and 331–335 (GIGEN) contribute to the ATP site. Glu385 is a Mg(2+) binding site.

The protein belongs to the acetokinase family. Homodimer. The cofactor is Mg(2+). Requires Mn(2+) as cofactor.

The protein resides in the cytoplasm. It carries out the reaction acetate + ATP = acetyl phosphate + ADP. The protein operates within metabolic intermediate biosynthesis; acetyl-CoA biosynthesis; acetyl-CoA from acetate: step 1/2. Its function is as follows. Catalyzes the formation of acetyl phosphate from acetate and ATP. Can also catalyze the reverse reaction. The sequence is that of Acetate kinase from Shewanella sp. (strain MR-4).